We begin with the raw amino-acid sequence, 273 residues long: Hydroxyethylthiazole kinase (273 aa).

Methionine 41 serves as a coordination point for substrate. ATP contacts are provided by arginine 117 and threonine 170. A substrate-binding site is contributed by glycine 197.

Belongs to the Thz kinase family. Mg(2+) serves as cofactor.

The catalysed reaction is 5-(2-hydroxyethyl)-4-methylthiazole + ATP = 4-methyl-5-(2-phosphooxyethyl)-thiazole + ADP + H(+). The protein operates within cofactor biosynthesis; thiamine diphosphate biosynthesis; 4-methyl-5-(2-phosphoethyl)-thiazole from 5-(2-hydroxyethyl)-4-methylthiazole: step 1/1. Catalyzes the phosphorylation of the hydroxyl group of 4-methyl-5-beta-hydroxyethylthiazole (THZ). The polypeptide is Hydroxyethylthiazole kinase (Clostridium acetobutylicum (strain ATCC 824 / DSM 792 / JCM 1419 / IAM 19013 / LMG 5710 / NBRC 13948 / NRRL B-527 / VKM B-1787 / 2291 / W)).